We begin with the raw amino-acid sequence, 672 residues long: uncharacterized protein (672 aa).

Positions 1 to 10 (MAKSDGDDPL) are enriched in basic and acidic residues. A disordered region spans residues 1–40 (MAKSDGDDPLRPASPRLRSSRRHSLRYSAYTGGPDPLAPP).

This is an uncharacterized protein from Mycobacterium tuberculosis (strain CDC 1551 / Oshkosh).